The chain runs to 641 residues: SUMO-activating enzyme subunit 2-A (641 aa).

ATP contacts are provided by residues 24–29 (GAGGIG), Asp-48, 56–59 (NLNR), Lys-72, 95–96 (SI), and 117–122 (DNNAAR). Zn(2+) contacts are provided by Cys-158 and Cys-161. The active-site Glycyl thioester intermediate is Cys-173. The Zn(2+) site is built by Cys-439 and Cys-442. The interval 546 to 641 (GDVPEKGPQK…EEDDDIIALD (96 aa)) is disordered. A compositionally biased stretch (basic and acidic residues) spans 548–561 (VPEKGPQKPPEESV). The span at 562 to 579 (KNITNGSDDGAQPSTSKA) shows a compositional bias: polar residues. 2 stretches are compositionally biased toward acidic residues: residues 582-594 (QDDV…DEES) and 630-641 (PVEEDDDIIALD).

It belongs to the ubiquitin-activating E1 family. In terms of assembly, heterodimer of sae1 and uba2/sae2. The heterodimer corresponds to the two domains that are encoded on a single polypeptide chain in ubiquitin-activating enzyme E1. Interacts with ube2i.

Its subcellular location is the nucleus. It functions in the pathway protein modification; protein sumoylation. The heterodimer acts as an E1 ligase for sumo1, sumo2, and sumo3. It mediates ATP-dependent activation of sumo proteins followed by formation of a thioester bond between a sumo protein and a conserved active site cysteine residue on uba2/sae2. This Xenopus laevis (African clawed frog) protein is SUMO-activating enzyme subunit 2-A (uba2-a).